Reading from the N-terminus, the 220-residue chain is ATP synthase subunit delta (220 aa).

The protein belongs to the ATPase delta chain family. As to quaternary structure, F-type ATPases have 2 components, F(1) - the catalytic core - and F(0) - the membrane proton channel. F(1) has five subunits: alpha(3), beta(3), gamma(1), delta(1), epsilon(1). F(0) has three main subunits: a(1), b(2) and c(10-14). The alpha and beta chains form an alternating ring which encloses part of the gamma chain. F(1) is attached to F(0) by a central stalk formed by the gamma and epsilon chains, while a peripheral stalk is formed by the delta and b chains.

It localises to the cell inner membrane. Functionally, f(1)F(0) ATP synthase produces ATP from ADP in the presence of a proton or sodium gradient. F-type ATPases consist of two structural domains, F(1) containing the extramembraneous catalytic core and F(0) containing the membrane proton channel, linked together by a central stalk and a peripheral stalk. During catalysis, ATP synthesis in the catalytic domain of F(1) is coupled via a rotary mechanism of the central stalk subunits to proton translocation. Its function is as follows. This protein is part of the stalk that links CF(0) to CF(1). It either transmits conformational changes from CF(0) to CF(1) or is implicated in proton conduction. The protein is ATP synthase subunit delta of Gluconobacter oxydans (strain 621H) (Gluconobacter suboxydans).